The sequence spans 22 residues: IVGGYECEAYSKPYQVSINLGY.

Residues 1–22 form the Peptidase S1 domain; sequence IVGGYECEAYSKPYQVSINLGY.

This sequence belongs to the peptidase S1 family. Detected in skeletal muscle (at protein level).

The protein localises to the cytoplasm. Serine protease which degrades the myosin heavy chain and tropomyosin, but not actin. Selectively cleaves Arg-|-Xaa bonds. The sequence is that of Myofibril-bound serine protease from Saurida undosquamis (Brushtooth lizardfish).